Consider the following 360-residue polypeptide: GTPase Obg (360 aa).

The Obg domain occupies 1–156 (MFVDSVEIII…KCVRLELKLI (156 aa)). The OBG-type G domain maps to 157-360 (ADIGLVGFPN…LKFVLLKALQ (204 aa)). GTP contacts are provided by residues 163-170 (GFPNAGKS), 188-192 (FTTLV), 210-213 (DIPG), 279-282 (NKCD), and 341-343 (SAV). The Mg(2+) site is built by S170 and T190.

It belongs to the TRAFAC class OBG-HflX-like GTPase superfamily. OBG GTPase family. In terms of assembly, monomer. Requires Mg(2+) as cofactor.

The protein resides in the cytoplasm. Its function is as follows. An essential GTPase which binds GTP, GDP and possibly (p)ppGpp with moderate affinity, with high nucleotide exchange rates and a fairly low GTP hydrolysis rate. Plays a role in control of the cell cycle, stress response, ribosome biogenesis and in those bacteria that undergo differentiation, in morphogenesis control. This chain is GTPase Obg, found in Helicobacter pylori (strain P12).